The chain runs to 434 residues: Adenylosuccinate synthetase (434 aa).

GTP is bound by residues 22 to 28 (GDEGKGK) and 50 to 52 (GHT). Asp-23 serves as the catalytic Proton acceptor. Mg(2+) is bound by residues Asp-23 and Gly-50. Residues 23–26 (DEGK), 48–51 (NAGH), Thr-139, Arg-153, Gln-234, Thr-249, and Arg-313 each bind IMP. Catalysis depends on His-51, which acts as the Proton donor. 309-315 (ATTGRKR) contacts substrate. GTP contacts are provided by residues Arg-315, 341–343 (KLD), and 423–425 (SVG).

This sequence belongs to the adenylosuccinate synthetase family. In terms of assembly, homodimer. Mg(2+) is required as a cofactor.

The protein localises to the cytoplasm. The enzyme catalyses IMP + L-aspartate + GTP = N(6)-(1,2-dicarboxyethyl)-AMP + GDP + phosphate + 2 H(+). It functions in the pathway purine metabolism; AMP biosynthesis via de novo pathway; AMP from IMP: step 1/2. In terms of biological role, plays an important role in the de novo pathway of purine nucleotide biosynthesis. Catalyzes the first committed step in the biosynthesis of AMP from IMP. This Chlorobium phaeobacteroides (strain DSM 266 / SMG 266 / 2430) protein is Adenylosuccinate synthetase.